The primary structure comprises 817 residues: Sorting nexin-29 (817 aa).

An RUN domain is found at 37 to 181 (SDSDSRVTCL…ILFAINIDNK (145 aa)). 5 positions are modified to phosphoserine: Ser-269, Ser-292, Ser-293, Ser-331, and Ser-345. A disordered region spans residues 271 to 299 (DDEEDEQSSGDVFKKIPGAGESSEENSDR). 2 disordered regions span residues 344-381 (KSID…LDAG) and 417-460 (APLG…LPSA). Residues 347–358 (DDEDADENEDDV) are compositionally biased toward acidic residues. Basic and acidic residues predominate over residues 369 to 378 (GHSESPEKPL). The span at 445-460 (SPPGQESPLSSLLPSA) shows a compositional bias: low complexity. Ser-451 is subject to Phosphoserine. Residues 466–546 (MTVSDLRQAI…VLKVQLKKYV (81 aa)) adopt a coiled-coil conformation. Ser-641 bears the Phosphoserine mark. A Phosphothreonine modification is found at Thr-643. Residues Ser-644 and Ser-648 each carry the phosphoserine modification. The region spanning 658–781 (ALINVWIPSV…PFFVDITPPG (124 aa)) is the PX domain. The segment at 784–817 (LTKNSRPKVASRFPKLARGHPRETRNVEPQSGDL) is disordered.

Belongs to the sorting nexin family.

In Bos taurus (Bovine), this protein is Sorting nexin-29 (SNX29).